The chain runs to 729 residues: Solute carrier family 15 member 2 (729 aa).

The interval 1–34 is disordered; that stretch reads MNPFQKNESKETLFSPVSIEEVPPRPPSPPKKPS. Residues 1–57 are Cytoplasmic-facing; that stretch reads MNPFQKNESKETLFSPVSIEEVPPRPPSPPKKPSPTICGSNYPLSIAFIVVNEFCER. Residue Ser9 is modified to Phosphoserine. The residue at position 12 (Thr12) is a Phosphothreonine. Positions 24–33 are enriched in pro residues; that stretch reads PRPPSPPKKP. Ser28 bears the Phosphoserine mark. A helical membrane pass occupies residues 58–78; that stretch reads FSYYGMKAVLILYFLYFLHWN. Topologically, residues 79–83 are extracellular; sequence EDTST. A helical membrane pass occupies residues 84–104; the sequence is SIYHAFSSLCYFTPILGAAIA. Residues 105–113 lie on the Cytoplasmic side of the membrane; it reads DSWLGKFKT. Residues 114–134 form a helical membrane-spanning segment; sequence IIYLSLVYVLGHVIKSLGALP. Residues 135-139 lie on the Extracellular side of the membrane; the sequence is ILGGQ. Residues 140 to 160 form a helical membrane-spanning segment; sequence VVHTVLSLIGLSLIALGTGGI. The Cytoplasmic portion of the chain corresponds to 161–183; it reads KPCVAAFGGDQFEEKHAEERTRY. The helical transmembrane segment at 184–204 threads the bilayer; that stretch reads FSVFYLSINAGSLISTFITPM. Residues 205–217 are Extracellular-facing; sequence LRGDVQCFGEDCY. Residues 218–238 traverse the membrane as a helical segment; the sequence is ALAFGVPGLLMVIALVVFAMG. Over 239–295 the chain is Cytoplasmic; the sequence is SKIYNKPPPEGNIVAQVFKCIWFAISNRFKNRSGDIPKRQHWLDWAAEKYPKQLIMD. Residues 296–316 traverse the membrane as a helical segment; that stretch reads VKALTRVLFLYIPLPMFWALL. The Extracellular portion of the chain corresponds to 317 to 343; that stretch reads DQQGSRWTLQAIRMNRNLGFFVLQPDQ. The chain crosses the membrane as a helical span at residues 344–364; sequence MQVLNPLLVLIFIPLFDFVIY. Residues 365 to 380 are Cytoplasmic-facing; the sequence is RLVSKCGINFSSLRKM. Residues 381–401 traverse the membrane as a helical segment; it reads AVGMILACLAFAVAAAVEIKI. Residues 402–611 are Extracellular-facing; it reads NEMAPAQPGP…PANKMSIAWQ (210 aa). An extracellular domain (ECD) region spans residues 402 to 611; sequence NEMAPAQPGP…PANKMSIAWQ (210 aa). Residues Asn435, Asn472, Asn528, Asn567, and Asn587 are each glycosylated (N-linked (GlcNAc...) asparagine). Residues 612 to 632 traverse the membrane as a helical segment; that stretch reads LPQYALVTAGEVMFSVTGLEF. Residues 633–643 lie on the Cytoplasmic side of the membrane; the sequence is SYSQAPSSMKS. A helical membrane pass occupies residues 644 to 664; sequence VLQAAWLLTIAVGNIIVLVVA. The Extracellular portion of the chain corresponds to 665-674; it reads QFSGLVQWAE. A helical transmembrane segment spans residues 675 to 695; that stretch reads FILFSCLLLVICLIFSIMGYY. Residues 696–729 are Cytoplasmic-facing; that stretch reads YVPVKTEDMRGPADKHIPHIQGNMIKLETKKTKL.

Belongs to the major facilitator superfamily. Proton-dependent oligopeptide transporter (POT/PTR) (TC 2.A.17) family. In terms of assembly, interacts (via extracellular domain region) with trypsin. In terms of tissue distribution, expressed in kidney. Not detected in intestine. Highly expressed in macrophages.

The protein resides in the apical cell membrane. The protein localises to the cytoplasmic vesicle. It localises to the phagosome membrane. Its subcellular location is the cell membrane. It carries out the reaction a dipeptide(out) + 2 H(+)(out) = a dipeptide(in) + 2 H(+)(in). The catalysed reaction is N-acetyl-D-muramoyl-L-alanyl-D-isoglutamine(out) + 3 H(+)(out) = N-acetyl-D-muramoyl-L-alanyl-D-isoglutamine(in) + 3 H(+)(in). It catalyses the reaction glycyl-L-leucine(out) + 2 H(+)(out) = glycyl-L-leucine(in) + 2 H(+)(in). The enzyme catalyses glycyl-L-lysine(out) + 2 H(+)(out) = glycyl-L-lysine(in) + 2 H(+)(in). It carries out the reaction glycyl-L-glutamate(out) + 3 H(+)(out) = glycyl-L-glutamate(in) + 3 H(+)(in). The catalysed reaction is L-alanyl-L-alanine(out) + 2 H(+)(out) = L-alanyl-L-alanine(in) + 2 H(+)(in). It catalyses the reaction an L-amino acid tripeptide(out) + 2 H(+)(out) = an L-amino acid tripeptide(in) + 2 H(+)(in). The enzyme catalyses carnosine(out) + 2 H(+)(out) = carnosine(in) + 2 H(+)(in). Functionally, proton-coupled amino-acid transporter that transports oligopeptides of 2 to 4 amino acids with a preference for dipeptides. Transports neutral and anionic dipeptides with a proton to peptide stoichiometry of 2:1 or 3:1. In kidney, involved in the absorption of circulating di- and tripeptides from the glomerular filtrate. Can also transport beta-lactam antibiotics, such as the aminocephalosporin cefadroxil, and other antiviral and anticancer drugs. Transports the dipeptide-like aminopeptidase inhibitor bestatin. Also able to transport carnosine. Involved in innate immunity by promoting the detection of microbial pathogens by NOD-like receptors (NLRs). Mediates transport of bacterial peptidoglycans across the plasma membrane or, in macrophages, the phagosome membrane: catalyzes the transport of certain bacterial peptidoglycans, such as muramyl dipeptide (MDP), the NOD2 ligand. In Homo sapiens (Human), this protein is Solute carrier family 15 member 2.